A 365-amino-acid chain; its full sequence is DNA replication and repair protein RecF (365 aa).

Residue 30-37 (GRNAQGKT) participates in ATP binding.

Belongs to the RecF family.

It is found in the cytoplasm. Functionally, the RecF protein is involved in DNA metabolism; it is required for DNA replication and normal SOS inducibility. RecF binds preferentially to single-stranded, linear DNA. It also seems to bind ATP. The chain is DNA replication and repair protein RecF from Streptococcus pneumoniae serotype 2 (strain D39 / NCTC 7466).